Reading from the N-terminus, the 1755-residue chain is BCL-6 corepressor (1755 aa).

The interval 309–345 (NSKQPRVPSAKAVTSGLPGDTALLLPPSPRPSPRVHL) is disordered. Phosphoserine occurs at positions 336, 340, 365, and 367. Residues 388 to 438 (LSNGKYPKAPEGGEGAQPVPGHARKTAVQDRKDGSSPPLLEKQTVTKDVTD) are disordered. K392 is subject to N6-acetyllysine. Position 423 is a phosphoserine (S423). Residues 498-514 (RSEIISTAPSSWVVPGP) are interaction with BCL6. Positions 557–578 (VSGSVSSAGRPASASPAPNANA) are enriched in low complexity. Disordered regions lie at residues 557 to 641 (VSGS…IFLS), 737 to 760 (ITKE…DPTL), 773 to 794 (TKLH…WNQG), and 815 to 844 (AKTD…SVEP). Residues 580 to 594 (GTKTSRSSVETTPSV) are compositionally biased toward polar residues. Low complexity predominate over residues 605–620 (PAKHSSSTSSKGAKAS). Basic and acidic residues predominate over residues 775–785 (LHPDVPTDKNL). K786 participates in a covalent cross-link: Glycyl lysine isopeptide (Lys-Gly) (interchain with G-Cter in SUMO2). A Glycyl lysine isopeptide (Lys-Gly) (interchain with G-Cter in SUMO2) cross-link involves residue K872. 2 disordered regions span residues 1071–1187 (IAEQ…EDPH) and 1220–1328 (QQVS…KENQ). A compositionally biased stretch (basic and acidic residues) spans 1076–1107 (ESERCEYSVGNKHRDPFEAPEDKDLPVEKYFV). Phosphoserine occurs at positions 1127 and 1139. Residues 1166–1175 (SKDDWPEREM) are compositionally biased toward basic and acidic residues. Over residues 1238-1252 (TQATQPEAIPQGTNI) the composition is skewed to polar residues. Basic and acidic residues predominate over residues 1253 to 1279 (TEEKPGRKRAEAKGNRSWSEESLKPSD). K1256 is covalently cross-linked (Glycyl lysine isopeptide (Lys-Gly) (interchain with G-Cter in SUMO2)). A phosphoserine mark is found at S1290, S1345, and S1410. A Glycyl lysine isopeptide (Lys-Gly) (interchain with G-Cter in SUMO2) cross-link involves residue K1413. Polar residues predominate over residues 1430 to 1447 (QSTQLPCSSSPQETTQSR). Residues 1430–1451 (QSTQLPCSSSPQETTQSRPMPP) form a disordered region. ANK repeat units follow at residues 1462 to 1495 (AGET…HRDN), 1496 to 1525 (AGYC…DVNC), and 1529 to 1558 (DGTR…DPTL). The necessary and sufficient for interaction with PCGF1 stretch occupies residues 1634–1748 (SDVFEFEFSE…SSVEWLHPSD (115 aa)).

This sequence belongs to the BCOR family. As to quaternary structure, interacts with BCL6; the interaction is direct. Forms ternary complexes with BCL6 and SMRT/NCOR2 on selected target genes promoters; potently repress expression. Can interact with HDAC1, HDAC3 and HDAC5. Interacts with PCGF1; the interaction is direct. Interacts with KDM2B. Component of an approximately 800 kDa repressive BCOR complex at least composed of BCOR, RYBP, PCGF1, RING1, RNF2/RING2, KDM2B and SKP1. Interacts with CPNE4 (via VWFA domain). Isoform 1 may interact with MLLT3/AF9. Ubiquitously expressed.

The protein resides in the nucleus. Transcriptional corepressor. May specifically inhibit gene expression when recruited to promoter regions by sequence-specific DNA-binding proteins such as BCL6 and MLLT3. This repression may be mediated at least in part by histone deacetylase activities which can associate with this corepressor. Involved in the repression of TFAP2A; impairs binding of BCL6 and KDM2B to TFAP2A promoter regions. Via repression of TFAP2A acts as a negative regulator of osteo-dentiogenic capacity in adult stem cells; the function implies inhibition of methylation on histone H3 'Lys-4' (H3K4me3) and 'Lys-36' (H3K36me2). The polypeptide is BCL-6 corepressor (BCOR) (Homo sapiens (Human)).